The sequence spans 49 residues: Astexin-3 (49 aa).

Positions 1 to 25 are excised as a propeptide; that stretch reads MRTYNRSLPARAGLTDLGKVTTHTK. The segment at residues 26 to 34 is a cross-link (isoaspartyl glycine isopeptide (Gly-Asp)); that stretch reads GPTPMVGLD.

This lasso peptide is hydrolyzed to a linear form by the isopeptidase AtxE2, in vitro. The isopeptidase AtxE2 only recognizes the threaded form (but not the unthreaded form).

It localises to the cytoplasm. The protein localises to the secreted. Functionally, shows weak antimicrobial activity against its phylogenetic relative Caulobacter crescentus. Does not show activity against other bacteria tested (E.coli, Vibrio sp, Burkhoderia thailandensis, and Salmonella newport). The sequence is that of Astexin-3 from Asticcacaulis excentricus (strain ATCC 15261 / DSM 4724 / KCTC 12464 / NCIMB 9791 / VKM B-1370 / CB 48).